The sequence spans 946 residues: Histone-lysine N-methyltransferase, H3 lysine-79 specific (946 aa).

The span at 1-18 shows a compositional bias: basic and acidic residues; that stretch reads MSEADAGARDESPSRTAE. Residues 1–28 are disordered; the sequence is MSEADAGARDESPSRTAEEPAAAMRIKE. The region spanning 54-369 is the DOT1 domain; that stretch reads QGKTLRLPGN…KLIKYYEDQR (316 aa). Residues 173–176, 196–205, E223, and 259–260 each bind S-adenosyl-L-methionine; these read YGET, FVDLGSGIGQ, and DF. The span at 368–409 shows a compositional bias: basic and acidic residues; the sequence is QRRRQEVKSSREGSEISDGRDMGLKKRKSQRESSVHPDKLQK. Disordered regions lie at residues 368–577 and 849–905; these read QRRR…HGGG and PTAS…GATE. The span at 410–422 shows a compositional bias: polar residues; it reads TEQAAASSHQSPK. The span at 464–484 shows a compositional bias: basic and acidic residues; it reads GKDREKEKEKKKNKIYEEKKV. 3 stretches are compositionally biased toward low complexity: residues 491 to 502, 512 to 528, and 855 to 864; these read KSSSSRYSSETP, NSIS…QPKA, and SKVSPSSSSS. The span at 880–903 shows a compositional bias: gly residues; that stretch reads GAGGGGKRGTSGGRKSDGGGGGGA.

It belongs to the class I-like SAM-binding methyltransferase superfamily. DOT1 family. As to quaternary structure, interacts with zfp-1 (via C-terminus) to form a heterodimer known as the zfp-1-dot-1.1 complex or DotCom complex.

The protein resides in the nucleus. The protein localises to the chromosome. The catalysed reaction is L-lysyl(79)-[histone H3] + 3 S-adenosyl-L-methionine = N(6),N(6),N(6)-trimethyl-L-lysyl(79)-[histone H3] + 3 S-adenosyl-L-homocysteine + 3 H(+). Histone methyltransferase, which in complex with zfp-1, methylates 'Lys-79' of histone H3 to activate transcription. During stress, the zfp-1-dot-1.1 complex also plays a role in the deubiquitination of histone H2B sites, which negatively modulates the RNA polymerase II-induced transcription of highly expressed genes. Involved in controlling tissue-specific gene expression, particularly in the epidermis. The polypeptide is Histone-lysine N-methyltransferase, H3 lysine-79 specific (Caenorhabditis elegans).